The primary structure comprises 674 residues: MFERNQKTIFVLDHTRYFSIASEEYISMDFLKGKPSAHSSAGGSSQFSKSLWTCACESSIEYCRVVWDLFPGKKHVRFIVSDTAAHIVNTWSASTQNMSHVMNAMVMVGVPSRSMPQSSDYSVIHGLRAAIEALAEPTDEQSQAMASGIPDDLILNEGRVICITSARDNTSMKSLEDIFNTVLIQQNVLSATPPKKGLGINHCHLVILNIVPLGIDSMVTNRNLLEISPLLDVEIHTVGAPDISYKLTHLILDHYDLASTTVTNIPMKEEQNANSSANYDVEILHSRRAHSITCGPDFSLPTSIKQGATYETVTLKWCTPRGCGSADLQPCLGQFLVTPVDVTSRPSSCLINFLLNGRSVLLEMPRKTGSKATSHMLSARGGEIFIHSLCITRSCMDEAPSIADGPGGRVNDYRTSELGQLMKMSRMVPLKSRDPAAPNLPRRLPRYFPLTTTSTVLFHLQRHLSWLPHFLHLLVKEMDKQDEVRCQQHIHELYKSASRGDVLPFTHTNGARLKPHKAKDQYRLLYRELEQLIQLNASTVHHKNLLESLQTLRAAYGDAPSKSEAGTVNLRSFTESPLSPERLEAMSNVSISSSTNSNSLLKASKRRMSNCGTRSLLDIISSAERSQSNKRLDFSGRICTPIGQIAKLYPDFGNKEKDAAAAAAASGVGVAPKE.

Residues 516-538 adopt a coiled-coil conformation; that stretch reads HKAKDQYRLLYRELEQLIQLNAS. The Nuclear localization signal (NLS) motif lies at 601 to 607; it reads LKASKRR.

Belongs to the Integrator subunit 13 family. In terms of assembly, belongs to the multiprotein complex Integrator, at least composed of IntS1, IntS2, IntS3, IntS4, omd/IntS5, IntS6, defl/IntS7, IntS8, IntS9, IntS10, IntS11, IntS12, asun/IntS13, IntS14 and IntS15. The core complex associates with protein phosphatase 2A subunits mts/PP2A and Pp2A-29B, to form the Integrator-PP2A (INTAC) complex. In terms of processing, phosphorylated.

It localises to the nucleus. It is found in the cytoplasm. The protein resides in the perinuclear region. Functionally, component of the integrator complex, a multiprotein complex that terminates RNA polymerase II (Pol II) transcription in the promoter-proximal region of genes. The integrator complex provides a quality checkpoint during transcription elongation by driving premature transcription termination of transcripts that are unfavorably configured for transcriptional elongation: the complex terminates transcription by (1) catalyzing dephosphorylation of the C-terminal domain (CTD) of Pol II subunit Polr2A/Rbp1 and Spt5, and (2) degrading the exiting nascent RNA transcript via endonuclease activity. The integrator complex is also involved in the 3'-end processing of the U7 snRNA, and also the spliceosomal snRNAs U1, U2, U4 and U5. The chain is Protein asunder (asun) from Drosophila persimilis (Fruit fly).